The sequence spans 421 residues: MPGSSRQSGREAGSALLSLQQEDQENVNPEKAAPDQRARAALKTGNARGNAPQQRLKARRVAPLKDLSINDEHVASGPSWKAASKQPAFTIHVDEEEDTQKIPPEHKEMRCEDALAFNAAVSLPGARKPLVPLDYPMDGSFESPHAMDMSIVLEEEKPVSVNEVPDYHEDIHTYLREMEIKCKPKVGYMKKQPDITNSMRAILVDWLVEVGEEYKLQNETLHLAVNYIDRFLSSMSVLRGKLQLVGTAAMLLASKFEEIYPPEVAEFVYITDDTYSKKQVLRMEHLVLKVLAFDLAAPTVNQFLNQYFLHQQPANCKVESLAMFLGELSLIDADPYLKYLPSLIAGAAFHLALYTVTGQSWPESLVQKTGYTLESLKPCLMDLHQTYLRAAQHTQQSIREKYKHSKYHGVSLLNPPETLNV.

Position 1 is an N-acetylmethionine (Met1). The disordered stretch occupies residues 1-60 (MPGSSRQSGREAGSALLSLQQEDQENVNPEKAAPDQRARAALKTGNARGNAPQQRLKARR). Ser5 carries the phosphoserine modification.

This sequence belongs to the cyclin family. Cyclin AB subfamily. Interacts with the CDK1 and CDK2 protein kinases to form serine/threonine kinase holoenzyme complexes. Interacts with CDK1 (hyperphosphorylated form in G1 and underphosphorylated forms in S and G2). Interacts with CDK2; the interaction increases from G1 to G2. Interacts (associated with CDK2 but not with CDK1) with SCAPER; regulates the activity of CCNA2/CDK2 by transiently maintaining CCNA2 in the cytoplasm. Forms a ternary complex with CDK2 and CDKN1B; CDKN1B inhibits the kinase activity of CDK2 through conformational rearrangements. Interacts with INCA1. In terms of processing, polyubiquitinated via 'Lys-11'-linked ubiquitin by the anaphase-promoting complex (APC/C), leading to its degradation by the proteasome. Deubiquitinated and stabilized by USP37 enables entry into S phase. Ubiquitinated during the G1 phase by the SCF(FBXO31) complex, leading to its proteasomal degradation.

Its subcellular location is the nucleus. It localises to the cytoplasm. Cyclin which controls both the G1/S and the G2/M transition phases of the cell cycle. Functions through the formation of specific serine/threonine kinase holoenzyme complexes with the cyclin-dependent protein kinases CDK1 and CDK2. The cyclin subunit confers the substrate specificity of these complexes and differentially interacts with and activates CDK1 and CDK2 throughout the cell cycle. This chain is Cyclin-A2, found in Mesocricetus auratus (Golden hamster).